Consider the following 98-residue polypeptide: Integration host factor subunit alpha (98 aa).

Residues 49–71 (FGNFDLRDKNQRPGRNPKTGEDI) form a disordered region.

It belongs to the bacterial histone-like protein family. Heterodimer of an alpha and a beta chain.

Its function is as follows. This protein is one of the two subunits of integration host factor, a specific DNA-binding protein that functions in genetic recombination as well as in transcriptional and translational control. The sequence is that of Integration host factor subunit alpha from Shewanella sp. (strain MR-4).